A 246-amino-acid polypeptide reads, in one-letter code: Indole-3-glycerol phosphate synthase (246 aa).

Belongs to the TrpC family.

It carries out the reaction 1-(2-carboxyphenylamino)-1-deoxy-D-ribulose 5-phosphate + H(+) = (1S,2R)-1-C-(indol-3-yl)glycerol 3-phosphate + CO2 + H2O. It functions in the pathway amino-acid biosynthesis; L-tryptophan biosynthesis; L-tryptophan from chorismate: step 4/5. This chain is Indole-3-glycerol phosphate synthase, found in Sulfurisphaera tokodaii (strain DSM 16993 / JCM 10545 / NBRC 100140 / 7) (Sulfolobus tokodaii).